A 297-amino-acid polypeptide reads, in one-letter code: UDP-N-acetylenolpyruvoylglucosamine reductase (297 aa).

The 166-residue stretch at 27 to 192 (IGGPADALLE…LRAAYRLHPG (166 aa)) folds into the FAD-binding PCMH-type domain. Arg-170 is a catalytic residue. Ser-220 serves as the catalytic Proton donor. The active site involves Glu-290.

The protein belongs to the MurB family. The cofactor is FAD.

Its subcellular location is the cytoplasm. It catalyses the reaction UDP-N-acetyl-alpha-D-muramate + NADP(+) = UDP-N-acetyl-3-O-(1-carboxyvinyl)-alpha-D-glucosamine + NADPH + H(+). It functions in the pathway cell wall biogenesis; peptidoglycan biosynthesis. In terms of biological role, cell wall formation. The chain is UDP-N-acetylenolpyruvoylglucosamine reductase from Rubrobacter xylanophilus (strain DSM 9941 / JCM 11954 / NBRC 16129 / PRD-1).